The following is a 485-amino-acid chain: GTPase Obg (485 aa).

Positions 2 to 159 constitute an Obg domain; that stretch reads SKFIDRVVLH…RDLVLELKSV (158 aa). The interval 64-84 is disordered; that stretch reads PHAKAGNGKPGEGGNRDGKMG. Residues 160-340 enclose the OBG-type G domain; sequence ADVGLVGFPS…LTFALADLVR (181 aa). GTP-binding positions include 166–173, 191–195, 212–215, 292–295, and 321–323; these read GFPSAGKS, FTTLV, DVPG, NKTD, and SAV. Mg(2+)-binding residues include S173 and T193. In terms of domain architecture, OCT spans 358–438; the sequence is PIAVDESGFT…IGDVTFDWEP (81 aa). Positions 457 to 469 are enriched in basic and acidic residues; the sequence is LEQSDRVSAAERK. A disordered region spans residues 457–485; that stretch reads LEQSDRVSAAERKHASRVRRGLVEDDEQR.

The protein belongs to the TRAFAC class OBG-HflX-like GTPase superfamily. OBG GTPase family. Monomer. Mg(2+) serves as cofactor.

Its subcellular location is the cytoplasm. In terms of biological role, an essential GTPase which binds GTP, GDP and possibly (p)ppGpp with moderate affinity, with high nucleotide exchange rates and a fairly low GTP hydrolysis rate. Plays a role in control of the cell cycle, stress response, ribosome biogenesis and in those bacteria that undergo differentiation, in morphogenesis control. The chain is GTPase Obg from Nocardia farcinica (strain IFM 10152).